The primary structure comprises 228 residues: tRNA (guanine-N(1)-)-methyltransferase (228 aa).

S-adenosyl-L-methionine is bound by residues Gly111 and 131 to 136 (IGDFIL).

It belongs to the RNA methyltransferase TrmD family. In terms of assembly, homodimer.

Its subcellular location is the cytoplasm. It carries out the reaction guanosine(37) in tRNA + S-adenosyl-L-methionine = N(1)-methylguanosine(37) in tRNA + S-adenosyl-L-homocysteine + H(+). Functionally, specifically methylates guanosine-37 in various tRNAs. The sequence is that of tRNA (guanine-N(1)-)-methyltransferase from Pelagibacter ubique (strain HTCC1062).